Here is a 411-residue protein sequence, read N- to C-terminus: Peptidase T (411 aa).

Residue His78 participates in Zn(2+) binding. Asp80 is a catalytic residue. Residue Asp140 coordinates Zn(2+). The active-site Proton acceptor is the Glu173. 3 residues coordinate Zn(2+): Glu174, Asp196, and His379.

It belongs to the peptidase M20B family. Zn(2+) serves as cofactor.

The protein localises to the cytoplasm. The catalysed reaction is Release of the N-terminal residue from a tripeptide.. In terms of biological role, cleaves the N-terminal amino acid of tripeptides. The polypeptide is Peptidase T (Yersinia pestis bv. Antiqua (strain Antiqua)).